We begin with the raw amino-acid sequence, 672 residues long: tRNA 5-methylaminomethyl-2-thiouridine biosynthesis bifunctional protein MnmC (672 aa).

The interval 1–243 (MTSITHAELG…KREMIAGCME (243 aa)) is tRNA (mnm(5)s(2)U34)-methyltransferase. The interval 269–672 (IGGGIASAAL…LRKGKAITEL (404 aa)) is FAD-dependent cmnm(5)s(2)U34 oxidoreductase.

It in the N-terminal section; belongs to the methyltransferase superfamily. tRNA (mnm(5)s(2)U34)-methyltransferase family. This sequence in the C-terminal section; belongs to the DAO family. Requires FAD as cofactor.

The protein localises to the cytoplasm. It carries out the reaction 5-aminomethyl-2-thiouridine(34) in tRNA + S-adenosyl-L-methionine = 5-methylaminomethyl-2-thiouridine(34) in tRNA + S-adenosyl-L-homocysteine + H(+). In terms of biological role, catalyzes the last two steps in the biosynthesis of 5-methylaminomethyl-2-thiouridine (mnm(5)s(2)U) at the wobble position (U34) in tRNA. Catalyzes the FAD-dependent demodification of cmnm(5)s(2)U34 to nm(5)s(2)U34, followed by the transfer of a methyl group from S-adenosyl-L-methionine to nm(5)s(2)U34, to form mnm(5)s(2)U34. The protein is tRNA 5-methylaminomethyl-2-thiouridine biosynthesis bifunctional protein MnmC of Vibrio vulnificus (strain CMCP6).